Reading from the N-terminus, the 122-residue chain is Large ribosomal subunit protein uL14 (122 aa).

This sequence belongs to the universal ribosomal protein uL14 family. Part of the 50S ribosomal subunit. Forms a cluster with proteins L3 and L19. In the 70S ribosome, L14 and L19 interact and together make contacts with the 16S rRNA in bridges B5 and B8.

In terms of biological role, binds to 23S rRNA. Forms part of two intersubunit bridges in the 70S ribosome. In Brachyspira hyodysenteriae (strain ATCC 49526 / WA1), this protein is Large ribosomal subunit protein uL14.